The sequence spans 322 residues: Ribosomal RNA small subunit methyltransferase H (322 aa).

S-adenosyl-L-methionine-binding positions include 34–36 (GGH), D59, F86, D112, and Q119.

Belongs to the methyltransferase superfamily. RsmH family.

Its subcellular location is the cytoplasm. The enzyme catalyses cytidine(1402) in 16S rRNA + S-adenosyl-L-methionine = N(4)-methylcytidine(1402) in 16S rRNA + S-adenosyl-L-homocysteine + H(+). Functionally, specifically methylates the N4 position of cytidine in position 1402 (C1402) of 16S rRNA. This chain is Ribosomal RNA small subunit methyltransferase H, found in Chlorobium limicola (strain DSM 245 / NBRC 103803 / 6330).